We begin with the raw amino-acid sequence, 2971 residues long: uncharacterized protein (2971 aa).

A disordered region spans residues 929–964 (SANFSNGPEESSLSTRLHIQKKRKAKKQRLETRRQK). Over residues 936–945 (PEESSLSTRL) the composition is skewed to polar residues. A compositionally biased stretch (basic residues) spans 946–955 (HIQKKRKAKK).

It localises to the plastid. It is found in the chloroplast. This is an uncharacterized protein from Chlamydomonas reinhardtii (Chlamydomonas smithii).